A 136-amino-acid polypeptide reads, in one-letter code: Peptide methionine sulfoxide reductase MsrB (136 aa).

The 123-residue stretch at 13–135 (ENDWRSKLTP…NSASLDFKDK (123 aa)) folds into the MsrB domain. Residues cysteine 52, cysteine 55, cysteine 101, and cysteine 104 each contribute to the Zn(2+) site. The active-site Nucleophile is cysteine 124.

Belongs to the MsrB Met sulfoxide reductase family. The cofactor is Zn(2+).

It carries out the reaction L-methionyl-[protein] + [thioredoxin]-disulfide + H2O = L-methionyl-(R)-S-oxide-[protein] + [thioredoxin]-dithiol. The chain is Peptide methionine sulfoxide reductase MsrB from Synechococcus sp. (strain RCC307).